The sequence spans 579 residues: Aspartate--tRNA(Asp/Asn) ligase (579 aa).

Residue E171 participates in L-aspartate binding. The tract at residues 195–198 (QLFK) is aspartate. R217 contributes to the L-aspartate binding site. Residues 217–219 (RDE) and Q226 each bind ATP. H444 contributes to the L-aspartate binding site. Position 475 (E475) interacts with ATP. R482 serves as a coordination point for L-aspartate. 527–530 (GLDR) provides a ligand contact to ATP.

The protein belongs to the class-II aminoacyl-tRNA synthetase family. Type 1 subfamily. In terms of assembly, homodimer.

The protein localises to the cytoplasm. It catalyses the reaction tRNA(Asx) + L-aspartate + ATP = L-aspartyl-tRNA(Asx) + AMP + diphosphate. Aspartyl-tRNA synthetase with relaxed tRNA specificity since it is able to aspartylate not only its cognate tRNA(Asp) but also tRNA(Asn). Reaction proceeds in two steps: L-aspartate is first activated by ATP to form Asp-AMP and then transferred to the acceptor end of tRNA(Asp/Asn). This Thermotoga maritima (strain ATCC 43589 / DSM 3109 / JCM 10099 / NBRC 100826 / MSB8) protein is Aspartate--tRNA(Asp/Asn) ligase.